The sequence spans 131 residues: Phosphoribosyl-AMP cyclohydrolase (131 aa).

Asp76 serves as a coordination point for Mg(2+). Residue Cys77 participates in Zn(2+) binding. The Mg(2+) site is built by Asp78 and Asp80. Cys94 and Cys101 together coordinate Zn(2+).

This sequence belongs to the PRA-CH family. Homodimer. It depends on Mg(2+) as a cofactor. Zn(2+) is required as a cofactor.

The protein resides in the cytoplasm. The enzyme catalyses 1-(5-phospho-beta-D-ribosyl)-5'-AMP + H2O = 1-(5-phospho-beta-D-ribosyl)-5-[(5-phospho-beta-D-ribosylamino)methylideneamino]imidazole-4-carboxamide. Its pathway is amino-acid biosynthesis; L-histidine biosynthesis; L-histidine from 5-phospho-alpha-D-ribose 1-diphosphate: step 3/9. Its function is as follows. Catalyzes the hydrolysis of the adenine ring of phosphoribosyl-AMP. This chain is Phosphoribosyl-AMP cyclohydrolase, found in Stutzerimonas stutzeri (strain A1501) (Pseudomonas stutzeri).